A 393-amino-acid polypeptide reads, in one-letter code: NAD(P)H-quinone oxidoreductase subunit H, chloroplastic (393 aa).

It belongs to the complex I 49 kDa subunit family. NDH is composed of at least 16 different subunits, 5 of which are encoded in the nucleus.

It localises to the plastid. The protein resides in the chloroplast thylakoid membrane. It catalyses the reaction a plastoquinone + NADH + (n+1) H(+)(in) = a plastoquinol + NAD(+) + n H(+)(out). It carries out the reaction a plastoquinone + NADPH + (n+1) H(+)(in) = a plastoquinol + NADP(+) + n H(+)(out). Functionally, NDH shuttles electrons from NAD(P)H:plastoquinone, via FMN and iron-sulfur (Fe-S) centers, to quinones in the photosynthetic chain and possibly in a chloroplast respiratory chain. The immediate electron acceptor for the enzyme in this species is believed to be plastoquinone. Couples the redox reaction to proton translocation, and thus conserves the redox energy in a proton gradient. The chain is NAD(P)H-quinone oxidoreductase subunit H, chloroplastic from Platanus occidentalis (Sycamore).